The following is a 711-amino-acid chain: Hydroperoxide isomerase ALOXE3 (711 aa).

Residues 2-119 (AVYRLCVTTG…TVELRPGTAR (118 aa)) form the PLAT domain. A Lipoxygenase domain is found at 119-711 (RTICQDALPL…PPLIENSVSI (593 aa)). Fe cation is bound by residues H408, H413, H588, N592, and I711.

Belongs to the lipoxygenase family. It depends on Fe cation as a cofactor.

It localises to the cytoplasm. It carries out the reaction a hydroperoxyeicosatetraenoate = a hydroxy-epoxy-eicosatetraenoate. The enzyme catalyses a hydroperoxyeicosatetraenoate = an oxoeicosatetraenoate + H2O. The catalysed reaction is (12R)-hydroperoxy-(5Z,8Z,10E,14Z)-eicosatetraenoate = (8R)-hydroxy-(11R,12R)-epoxy-(5Z,9E,14Z)-eicosatrienoate. It catalyses the reaction (12S)-hydroperoxy-(5Z,8Z,10E,14Z)-eicosatetraenoate = (8R)-hydroxy-(11S,12S)-epoxy-(5Z,9E,14Z)-eicosatrienoate. It carries out the reaction (12S)-hydroperoxy-(5Z,8Z,10E,14Z)-eicosatetraenoate = (10R)-hydroxy-(11S,12S)-epoxy-(5Z,8Z,14Z)-eicosatrienoate. The enzyme catalyses (15S)-hydroperoxy-(5Z,8Z,11Z,13E)-eicosatetraenoate = (13R)-hydroxy-(14S,15S)-epoxy-(5Z,8Z,11Z)-eicosatrienoate. The catalysed reaction is (5S)-hydroperoxy-(6E,8Z,11Z,14Z)-eicosatetraenoate = 7R-hydroxy-5S,6S-epoxy-(8Z,11Z,14Z)-eicosatrienoate. It catalyses the reaction (13S)-hydroperoxy-(9Z,11E)-octadecadienoate = 11-hydroxy-(12S,13S)-epoxy-(9Z)-octadecenoate. It carries out the reaction N-[omega-(9R)-hydroperoxy-(10E,12Z)-octadecadienoyloxy]acyl-beta-D-glucosyl-(1&lt;-&gt;1)-octadecasphing-4E-enine = a N-[omega-(9R,10R)-epoxy-(13R)-hydroxy-(11E)-octadecenoyloxy]acyl-beta-D-glucosyl-(1&lt;-&gt;1)-sphing-4E-enine. The enzyme catalyses a N-[omega-(9R)-hydroperoxy-(10E,12Z)-octadecadienoyloxy]-acylsphin-4E-enine = a N-[omega-(9R,10R)-epoxy-(13R)-hydroxy-(11E)-octadecenoyloxy]-acylsphing-4E-enine. The catalysed reaction is (12R)-hydroperoxy-(5Z,8Z,10E,14Z)-eicosatetraenoate = 12-oxo-(5Z,8Z,10E,14Z)-eicosatetraenoate + H2O. It catalyses the reaction (12S)-hydroperoxy-(5Z,8Z,10E,14Z)-eicosatetraenoate = 12-oxo-(5Z,8Z,10E,14Z)-eicosatetraenoate + H2O. It carries out the reaction (15S)-hydroperoxy-(5Z,8Z,11Z,13E)-eicosatetraenoate = 15-oxo-(5Z,8Z,11Z,13E)-eicosatetraenoate + H2O. The enzyme catalyses (13S)-hydroperoxy-(9Z,11E)-octadecadienoate = 13-oxo-(9Z,11E)-octadecadienoate + H2O. The catalysed reaction is (8S)-hydroperoxy-(5Z,9E,11Z,14Z)-eicosatetraenoate = (10R)-hydroxy-(8S,9S)-epoxy-(5Z,11Z,14Z)-eicosatrienoate. It catalyses the reaction (8R)-hydroperoxy-(5Z,9E,11Z,14Z)-eicosatetraenoate = 8-oxo-(5Z,9E,11Z,14Z)-eicosatetraenoate + H2O. It carries out the reaction (8S)-hydroperoxy-(5Z,9E,11Z,14Z)-eicosatetraenoate = 8-oxo-(5Z,9E,11Z,14Z)-eicosatetraenoate + H2O. It participates in lipid metabolism; hydroperoxy eicosatetraenoic acid biosynthesis. The protein operates within lipid metabolism; sphingolipid metabolism. Functionally, non-heme iron-containing lipoxygenase which is atypical in that it displays a prominent hydroperoxide isomerase activity and a reduced lipoxygenases activity. The hydroperoxide isomerase activity catalyzes the isomerization of hydroperoxides, derived from arachidonic and linoleic acid by ALOX12B, into hepoxilin-type epoxyalcohols and ketones. In presence of oxygen, oxygenates polyunsaturated fatty acids, including arachidonic acid, to produce fatty acid hydroperoxides. In the skin, acts downstream of ALOX12B on the linoleate moiety of esterified omega-hydroxyacyl-sphingosine (EOS) ceramides to produce an epoxy-ketone derivative, a crucial step in the conjugation of omega-hydroxyceramide to membrane proteins. Therefore plays a crucial role in the synthesis of corneocytes lipid envelope and the establishment of the skin barrier to water loss. In parallel, it may have a signaling function in barrier formation through the production of hepoxilins metabolites. Also plays a role in adipocyte differentiation through hepoxilin A3 and hepoxilin B3 production which in turn activate PPARG. Through the production of hepoxilins in the spinal cord, it may regulate inflammatory tactile allodynia. This Rattus norvegicus (Rat) protein is Hydroperoxide isomerase ALOXE3.